Reading from the N-terminus, the 401-residue chain is Steroid C26-monooxygenase (401 aa).

Cys343 contacts heme.

Belongs to the cytochrome P450 family. The cofactor is heme.

The catalysed reaction is cholest-4-en-3-one + 6 reduced [2Fe-2S]-[ferredoxin] + 3 O2 + 5 H(+) = (25R)-3-oxocholest-4-en-26-oate + 6 oxidized [2Fe-2S]-[ferredoxin] + 4 H2O. The protein operates within steroid metabolism; cholesterol degradation. Involved in the utilization of cholesterol as the sole carbon and energy source by degrading the side chain. Primarily catalyzes the sequential oxidation of the terminal methyl of cholest-4-en-3-one into (25R)-26-hydroxycholest-4-en-3-one (alcohol), (25R)-26-oxocholest-4-en-3-one (aldehyde), to finally yield the carboxylic acid (25R)-3-oxocholest-4-en-26-oate. Also able to sequentially oxidize cholesterol itself, not only cholest-4-en-3-one. The protein is Steroid C26-monooxygenase of Mycolicibacterium smegmatis (strain ATCC 700084 / mc(2)155) (Mycobacterium smegmatis).